A 320-amino-acid chain; its full sequence is Cytochrome f (320 aa).

The first 35 residues, 1 to 35, serve as a signal peptide directing secretion; it reads MRNINTYDWMKKWMTRSISILVMIHMITRTSISNA. Residues Tyr36, Cys56, Cys59, and His60 each contribute to the heme site. The helical transmembrane segment at 286-306 threads the bilayer; the sequence is VQGLLLLLASVILAQIFLVLK.

This sequence belongs to the cytochrome f family. In terms of assembly, the 4 large subunits of the cytochrome b6-f complex are cytochrome b6, subunit IV (17 kDa polypeptide, petD), cytochrome f and the Rieske protein, while the 4 small subunits are PetG, PetL, PetM and PetN. The complex functions as a dimer. The cofactor is heme.

It is found in the plastid. The protein resides in the chloroplast thylakoid membrane. In terms of biological role, component of the cytochrome b6-f complex, which mediates electron transfer between photosystem II (PSII) and photosystem I (PSI), cyclic electron flow around PSI, and state transitions. This chain is Cytochrome f, found in Cycas taitungensis (Prince sago).